A 184-amino-acid polypeptide reads, in one-letter code: Shikimate kinase (184 aa).

Residue 17–22 (GAGKTT) participates in ATP binding. Residue threonine 21 coordinates Mg(2+). Substrate contacts are provided by aspartate 39, arginine 63, and glycine 85. Position 123 (arginine 123) interacts with ATP. Arginine 142 contacts substrate.

Belongs to the shikimate kinase family. As to quaternary structure, monomer. It depends on Mg(2+) as a cofactor.

The protein localises to the cytoplasm. The enzyme catalyses shikimate + ATP = 3-phosphoshikimate + ADP + H(+). Its pathway is metabolic intermediate biosynthesis; chorismate biosynthesis; chorismate from D-erythrose 4-phosphate and phosphoenolpyruvate: step 5/7. Catalyzes the specific phosphorylation of the 3-hydroxyl group of shikimic acid using ATP as a cosubstrate. This is Shikimate kinase from Burkholderia lata (strain ATCC 17760 / DSM 23089 / LMG 22485 / NCIMB 9086 / R18194 / 383).